An 893-amino-acid polypeptide reads, in one-letter code: Eukaryotic translation initiation factor 3 subunit A (893 aa).

The region spanning 319 to 502 (LQRMAAHVLL…NSIFFGTDLT (184 aa)) is the PCI domain. 2 coiled-coil regions span residues 576-707 (QKII…RAKR) and 784-881 (EIAL…REVA). Disordered regions lie at residues 592–634 (AREL…EIQA) and 837–893 (AEAR…RRRQ). A compositionally biased stretch (basic and acidic residues) spans 837–881 (AEARRLEREAEDEKRRQQYEKQRAKEEEAERKIQEDRDRLAREVA).

This sequence belongs to the eIF-3 subunit A family. Component of the eukaryotic translation initiation factor 3 (eIF-3) complex. The eIF-3 complex interacts with pix.

Its subcellular location is the cytoplasm. Functionally, RNA-binding component of the eukaryotic translation initiation factor 3 (eIF-3) complex, which is involved in protein synthesis of a specialized repertoire of mRNAs and, together with other initiation factors, stimulates binding of mRNA and methionyl-tRNAi to the 40S ribosome. The eIF-3 complex specifically targets and initiates translation of a subset of mRNAs involved in cell proliferation. The chain is Eukaryotic translation initiation factor 3 subunit A from Drosophila grimshawi (Hawaiian fruit fly).